The chain runs to 261 residues: Zinc finger protein 664 (261 aa).

9 C2H2-type zinc fingers span residues Y3–H25, H31–H53, Y59–H81, Y87–H109, Y115–H137, F143–H165, Y171–H193, Y199–H221, and F227–H249. K257 is covalently cross-linked (Glycyl lysine isopeptide (Lys-Gly) (interchain with G-Cter in SUMO2)).

This sequence belongs to the krueppel C2H2-type zinc-finger protein family.

The protein localises to the nucleus. Functionally, may be involved in transcriptional regulation. This is Zinc finger protein 664 (ZNF664) from Pongo abelii (Sumatran orangutan).